The sequence spans 564 residues: MKNTCGILLNLFLFIGCFLTCSASNTPKVQVHSGEIAGGFEYTYNGRKIYSFLGIPYASPPVQNNRFKEPQPVQPWLGVWNATVPGSACLGIEFGSGSKIIGQEDCLFLNVYTPKLPQENSAGDLMNVIVHIHGGGYYFGEGILYGPHYLLDNNDFVYVSINYRLGVLGFASTGDGVLPGNNGLKDQVAALKWIQQNIVAFGGDPNSVTITGMSAGASSVHNHLISPMSKGLFNRAIIQSGSAFCHWSTAENVAQKTKYIANLLGCPTNNSVEIVECLRSRPAKAIAKSYLNFMPWRNFPFTPFGPTVEVAGYEKFLPDIPEKLVPHDIPVLISIAQDEGLIFSTFLGLENGFNELNNNWNEHLPHILDYNYTISNENLRFKTAQDIKEFYFGDKPISKETKSNLSKMISDRSFGYGTSKAAQHIAAKNTAPVYFYEFGYSGNYSYVAFFDPKSYSRGSSPTHGDETNYVLKVDGFTVYDNEEDRKMIKTMVNIWATFIKSGVPDTENSEIWLPVSKNPADLFRFTKITQQQTFEAREQSTMAIMNFGVAYHYQNILNLMCQMT.

Positions 1-23 are cleaved as a signal peptide; sequence MKNTCGILLNLFLFIGCFLTCSA. A glycan (N-linked (GlcNAc...) asparagine) is linked at asparagine 81. Cysteines 89 and 106 form a disulfide. Serine 214 serves as the catalytic Acyl-ester intermediate. Cysteines 266 and 277 form a disulfide. An N-linked (GlcNAc...) asparagine glycan is attached at asparagine 269. The active-site Charge relay system is the glutamate 339. Asparagine 371, asparagine 404, and asparagine 443 each carry an N-linked (GlcNAc...) asparagine glycan. The Charge relay system role is filled by histidine 463.

Belongs to the type-B carboxylesterase/lipase family.

The enzyme catalyses a carboxylic ester + H2O = an alcohol + a carboxylate + H(+). In terms of biological role, overproduction of nonspecific esterases is a common mechanism of resistance to organophosphate insecticides. The polypeptide is Esterase FE4 (Myzus persicae (Green peach aphid)).